The chain runs to 268 residues: Octanoyltransferase (268 aa).

In terms of domain architecture, BPL/LPL catalytic spans 73-261 (GEADELVWLL…AFEEVFGPAV (189 aa)). Substrate is bound by residues 112 to 119 (RGGEYTYH), 192 to 194 (ALG), and 205 to 207 (GLS). Cys-223 acts as the Acyl-thioester intermediate in catalysis.

This sequence belongs to the LipB family.

It is found in the cytoplasm. The catalysed reaction is octanoyl-[ACP] + L-lysyl-[protein] = N(6)-octanoyl-L-lysyl-[protein] + holo-[ACP] + H(+). The protein operates within protein modification; protein lipoylation via endogenous pathway; protein N(6)-(lipoyl)lysine from octanoyl-[acyl-carrier-protein]: step 1/2. In terms of biological role, catalyzes the transfer of endogenously produced octanoic acid from octanoyl-acyl-carrier-protein onto the lipoyl domains of lipoate-dependent enzymes. Lipoyl-ACP can also act as a substrate although octanoyl-ACP is likely to be the physiological substrate. This is Octanoyltransferase from Agrobacterium fabrum (strain C58 / ATCC 33970) (Agrobacterium tumefaciens (strain C58)).